Here is a 334-residue protein sequence, read N- to C-terminus: Holliday junction branch migration complex subunit RuvB (334 aa).

Residues 4-186 (ADRLIAPISN…FGIVQRLEYY (183 aa)) are large ATPase domain (RuvB-L). ATP is bound by residues Ile-25, Arg-26, Gly-67, Lys-70, Thr-71, Thr-72, 133 to 135 (EDY), Arg-176, Tyr-186, and Arg-223. Thr-71 contributes to the Mg(2+) binding site. The small ATPAse domain (RuvB-S) stretch occupies residues 187 to 257 (KVADLQHIVQ…TADRALNMLD (71 aa)). Positions 260–334 (HQGFDYMDRK…RAYLHFGIEK (75 aa)) are head domain (RuvB-H). Positions 315 and 320 each coordinate DNA.

Belongs to the RuvB family. In terms of assembly, homohexamer. Forms an RuvA(8)-RuvB(12)-Holliday junction (HJ) complex. HJ DNA is sandwiched between 2 RuvA tetramers; dsDNA enters through RuvA and exits via RuvB. An RuvB hexamer assembles on each DNA strand where it exits the tetramer. Each RuvB hexamer is contacted by two RuvA subunits (via domain III) on 2 adjacent RuvB subunits; this complex drives branch migration. In the full resolvosome a probable DNA-RuvA(4)-RuvB(12)-RuvC(2) complex forms which resolves the HJ.

The protein localises to the cytoplasm. The enzyme catalyses ATP + H2O = ADP + phosphate + H(+). The RuvA-RuvB-RuvC complex processes Holliday junction (HJ) DNA during genetic recombination and DNA repair, while the RuvA-RuvB complex plays an important role in the rescue of blocked DNA replication forks via replication fork reversal (RFR). RuvA specifically binds to HJ cruciform DNA, conferring on it an open structure. The RuvB hexamer acts as an ATP-dependent pump, pulling dsDNA into and through the RuvAB complex. RuvB forms 2 homohexamers on either side of HJ DNA bound by 1 or 2 RuvA tetramers; 4 subunits per hexamer contact DNA at a time. Coordinated motions by a converter formed by DNA-disengaged RuvB subunits stimulates ATP hydrolysis and nucleotide exchange. Immobilization of the converter enables RuvB to convert the ATP-contained energy into a lever motion, pulling 2 nucleotides of DNA out of the RuvA tetramer per ATP hydrolyzed, thus driving DNA branch migration. The RuvB motors rotate together with the DNA substrate, which together with the progressing nucleotide cycle form the mechanistic basis for DNA recombination by continuous HJ branch migration. Branch migration allows RuvC to scan DNA until it finds its consensus sequence, where it cleaves and resolves cruciform DNA. This is Holliday junction branch migration complex subunit RuvB from Vibrio cholerae serotype O1 (strain ATCC 39315 / El Tor Inaba N16961).